We begin with the raw amino-acid sequence, 115 residues long: U3-lycotoxin-Ls1r (115 aa).

The signal sequence occupies residues 1–20; sequence MKFVLLFGVLLVTLFSYSSA. Positions 21-44 are excised as a propeptide; sequence EMLDDFHQADEDELVSLIKKEEAR. 4 disulfide bridges follow: Cys-48–Cys-63, Cys-55–Cys-72, Cys-62–Cys-87, and Cys-74–Cys-85.

This sequence belongs to the neurotoxin 19 (CSTX) family. 01 subfamily. As to expression, expressed by the venom gland.

It is found in the secreted. The sequence is that of U3-lycotoxin-Ls1r from Lycosa singoriensis (Wolf spider).